Consider the following 536-residue polypeptide: ATP synthase subunit beta (536 aa).

The segment at 1–57 (MVKAVSSSKGAAKVEQKKSAARSGVKKNASKSQASLQDTSSPLKTSSKNAHAKKDVQ) is disordered. Over residues 30-49 (SKSQASLQDTSSPLKTSSKN) the composition is skewed to polar residues. Position 208 to 215 (208 to 215 (GGAGVGKT)) interacts with ATP.

Belongs to the ATPase alpha/beta chains family. F-type ATPases have 2 components, CF(1) - the catalytic core - and CF(0) - the membrane proton channel. CF(1) has five subunits: alpha(3), beta(3), gamma(1), delta(1), epsilon(1). CF(0) has three main subunits: a(1), b(2) and c(9-12). The alpha and beta chains form an alternating ring which encloses part of the gamma chain. CF(1) is attached to CF(0) by a central stalk formed by the gamma and epsilon chains, while a peripheral stalk is formed by the delta and b chains.

It is found in the cell inner membrane. It carries out the reaction ATP + H2O + 4 H(+)(in) = ADP + phosphate + 5 H(+)(out). Its function is as follows. Produces ATP from ADP in the presence of a proton gradient across the membrane. The catalytic sites are hosted primarily by the beta subunits. This is ATP synthase subunit beta from Bartonella quintana (strain Toulouse) (Rochalimaea quintana).